The primary structure comprises 283 residues: Phosphatidylglycerol--prolipoprotein diacylglyceryl transferase (283 aa).

4 helical membrane-spanning segments follow: residues 17–37, 56–76, 92–112, and 117–137; these read LAVR…TFLG, FLTW…VLFY, WEGG…IWLF, and GIGF…GLAS. Position 139 (Arg139) interacts with a 1,2-diacyl-sn-glycero-3-phospho-(1'-sn-glycerol). Transmembrane regions (helical) follow at residues 194–214, 222–242, and 255–275; these read PSQL…VWLF, GQVA…AEFA, and GLSM…VGFV.

The protein belongs to the Lgt family.

The protein resides in the cell inner membrane. The catalysed reaction is L-cysteinyl-[prolipoprotein] + a 1,2-diacyl-sn-glycero-3-phospho-(1'-sn-glycerol) = an S-1,2-diacyl-sn-glyceryl-L-cysteinyl-[prolipoprotein] + sn-glycerol 1-phosphate + H(+). The protein operates within protein modification; lipoprotein biosynthesis (diacylglyceryl transfer). In terms of biological role, catalyzes the transfer of the diacylglyceryl group from phosphatidylglycerol to the sulfhydryl group of the N-terminal cysteine of a prolipoprotein, the first step in the formation of mature lipoproteins. This is Phosphatidylglycerol--prolipoprotein diacylglyceryl transferase from Neisseria meningitidis serogroup C (strain 053442).